A 125-amino-acid chain; its full sequence is Phosphoribosyl-AMP cyclohydrolase (125 aa).

Aspartate 74 lines the Mg(2+) pocket. Cysteine 75 lines the Zn(2+) pocket. Mg(2+) contacts are provided by aspartate 76 and aspartate 78. Residues cysteine 92 and cysteine 99 each contribute to the Zn(2+) site.

This sequence belongs to the PRA-CH family. As to quaternary structure, homodimer. Requires Mg(2+) as cofactor. It depends on Zn(2+) as a cofactor.

It localises to the cytoplasm. It carries out the reaction 1-(5-phospho-beta-D-ribosyl)-5'-AMP + H2O = 1-(5-phospho-beta-D-ribosyl)-5-[(5-phospho-beta-D-ribosylamino)methylideneamino]imidazole-4-carboxamide. The protein operates within amino-acid biosynthesis; L-histidine biosynthesis; L-histidine from 5-phospho-alpha-D-ribose 1-diphosphate: step 3/9. Catalyzes the hydrolysis of the adenine ring of phosphoribosyl-AMP. The polypeptide is Phosphoribosyl-AMP cyclohydrolase (Desulforapulum autotrophicum (strain ATCC 43914 / DSM 3382 / VKM B-1955 / HRM2) (Desulfobacterium autotrophicum)).